Reading from the N-terminus, the 154-residue chain is Ribosomal RNA large subunit methyltransferase H (154 aa).

S-adenosyl-L-methionine contacts are provided by residues G103 and 122 to 127; that span reads FSKLTF.

The protein belongs to the RNA methyltransferase RlmH family. Homodimer.

It is found in the cytoplasm. The enzyme catalyses pseudouridine(1915) in 23S rRNA + S-adenosyl-L-methionine = N(3)-methylpseudouridine(1915) in 23S rRNA + S-adenosyl-L-homocysteine + H(+). In terms of biological role, specifically methylates the pseudouridine at position 1915 (m3Psi1915) in 23S rRNA. This is Ribosomal RNA large subunit methyltransferase H from Caldicellulosiruptor saccharolyticus (strain ATCC 43494 / DSM 8903 / Tp8T 6331).